The sequence spans 86 residues: Large ribosomal subunit protein eL20 (86 aa).

It belongs to the eukaryotic ribosomal protein eL20 family. In terms of assembly, part of the 50S ribosomal subunit. Binds 23S rRNA.

In Sulfolobus acidocaldarius (strain ATCC 33909 / DSM 639 / JCM 8929 / NBRC 15157 / NCIMB 11770), this protein is Large ribosomal subunit protein eL20.